We begin with the raw amino-acid sequence, 582 residues long: Aspartate--tRNA(Asp/Asn) ligase (582 aa).

Glutamate 177 is a binding site for L-aspartate. The interval 201–204 (QLFK) is aspartate. Arginine 223 contacts L-aspartate. Residues 223-225 (RDE) and glutamine 232 each bind ATP. Histidine 447 contributes to the L-aspartate binding site. Residue glutamate 481 coordinates ATP. An L-aspartate-binding site is contributed by arginine 488. 533–536 (GLDR) contributes to the ATP binding site.

The protein belongs to the class-II aminoacyl-tRNA synthetase family. Type 1 subfamily. Homodimer.

It is found in the cytoplasm. It catalyses the reaction tRNA(Asx) + L-aspartate + ATP = L-aspartyl-tRNA(Asx) + AMP + diphosphate. In terms of biological role, aspartyl-tRNA synthetase with relaxed tRNA specificity since it is able to aspartylate not only its cognate tRNA(Asp) but also tRNA(Asn). Reaction proceeds in two steps: L-aspartate is first activated by ATP to form Asp-AMP and then transferred to the acceptor end of tRNA(Asp/Asn). The sequence is that of Aspartate--tRNA(Asp/Asn) ligase from Chlamydia trachomatis serovar L2 (strain ATCC VR-902B / DSM 19102 / 434/Bu).